The primary structure comprises 402 residues: Phosphopentomutase (402 aa).

The Mn(2+) site is built by Asp-10, Asp-301, His-306, Asp-342, His-343, and His-354.

It belongs to the phosphopentomutase family. The cofactor is Mn(2+).

It localises to the cytoplasm. The catalysed reaction is 2-deoxy-alpha-D-ribose 1-phosphate = 2-deoxy-D-ribose 5-phosphate. The enzyme catalyses alpha-D-ribose 1-phosphate = D-ribose 5-phosphate. The protein operates within carbohydrate degradation; 2-deoxy-D-ribose 1-phosphate degradation; D-glyceraldehyde 3-phosphate and acetaldehyde from 2-deoxy-alpha-D-ribose 1-phosphate: step 1/2. In terms of biological role, isomerase that catalyzes the conversion of deoxy-ribose 1-phosphate (dRib-1-P) and ribose 1-phosphate (Rib-1-P) to deoxy-ribose 5-phosphate (dRib-5-P) and ribose 5-phosphate (Rib-5-P), respectively. The polypeptide is Phosphopentomutase (Aeromonas salmonicida (strain A449)).